The following is a 171-amino-acid chain: 3-hydroxydecanoyl-[acyl-carrier-protein] dehydratase (171 aa).

His71 is a catalytic residue.

This sequence belongs to the thioester dehydratase family. FabA subfamily. As to quaternary structure, homodimer.

Its subcellular location is the cytoplasm. It catalyses the reaction a (3R)-hydroxyacyl-[ACP] = a (2E)-enoyl-[ACP] + H2O. It carries out the reaction (3R)-hydroxydecanoyl-[ACP] = (2E)-decenoyl-[ACP] + H2O. The catalysed reaction is (2E)-decenoyl-[ACP] = (3Z)-decenoyl-[ACP]. It functions in the pathway lipid metabolism; fatty acid biosynthesis. Necessary for the introduction of cis unsaturation into fatty acids. Catalyzes the dehydration of (3R)-3-hydroxydecanoyl-ACP to E-(2)-decenoyl-ACP and then its isomerization to Z-(3)-decenoyl-ACP. Can catalyze the dehydratase reaction for beta-hydroxyacyl-ACPs with saturated chain lengths up to 16:0, being most active on intermediate chain length. This Hamiltonella defensa subsp. Acyrthosiphon pisum (strain 5AT) protein is 3-hydroxydecanoyl-[acyl-carrier-protein] dehydratase.